The following is a 1233-amino-acid chain: uncharacterized protein (1233 aa).

7 disordered regions span residues 1–39 (MVES…PSTN), 65–116 (QELS…DAIS), 160–211 (AEGT…TDLS), 250–577 (EKMD…DAPR), 594–825 (DLEV…NSEK), 851–872 (NKEN…NSEK), and 902–955 (EDVE…ENSK). Over residues 72–83 (KSSKLKGHKKKN) the composition is skewed to basic residues. Ser180 is subject to Phosphoserine. Residues 183–199 (TRRKKNKKKKTTNRRGR) show a composition bias toward basic residues. Positions 201-211 (SSNPADTTDLS) are enriched in polar residues. 2 stretches are compositionally biased toward basic and acidic residues: residues 250 to 280 (EKMD…ETSS) and 287 to 300 (NEEK…REEN). Positions 329–345 (GQASTKDVESESLTKNG) are enriched in polar residues. Basic and acidic residues-rich tracts occupy residues 349 to 370 (KENE…DRDG) and 379 to 408 (NQKE…ELSV). The span at 409-422 (NHENNMSHNFNAAG) shows a compositional bias: polar residues. Ser462 carries the phosphoserine modification. A compositionally biased stretch (acidic residues) spans 466–478 (EKEEEEEEEEEEN). Composition is skewed to basic and acidic residues over residues 484 to 497 (VKKE…EAVR), 508 to 527 (STSK…EAGE), 594 to 622 (DLEV…DKIA), 631 to 672 (EDMK…KTPE), and 684 to 711 (RPED…DVKP). The residue at position 523 (Ser523) is a Phosphoserine. A compositionally biased stretch (polar residues) spans 728–739 (QRVQISTEQAET). The segment covering 753–783 (FKEEEKPKRFEITQEGDKITGKDTNHEHGEA) has biased composition (basic and acidic residues). Positions 855 to 868 (EDVEVDTEEDAEVE) are enriched in acidic residues. Position 861 is a phosphothreonine (Thr861). 2 stretches are compositionally biased toward basic and acidic residues: residues 910-920 (SKEDIETKCSE) and 935-948 (EVSK…TKED). The residue at position 975 (Ser975) is a Phosphoserine. Disordered regions lie at residues 984 to 1071 (LPEL…PKKA) and 1109 to 1128 (KDST…KPQD). Residues 986–999 (ELEKQDIKDNKGED) show a composition bias toward basic and acidic residues. Ser1037 and Ser1046 each carry phosphoserine. Composition is skewed to basic and acidic residues over residues 1062–1071 (QSTRENPKKA) and 1118–1127 (QSKKNNDKPQ). Residues 1132-1233 (TSEIRKLNEK…KLRELIYDTI (102 aa)) form the Glutaredoxin domain.

This is an uncharacterized protein from Saccharomyces cerevisiae (strain ATCC 204508 / S288c) (Baker's yeast).